Here is a 358-residue protein sequence, read N- to C-terminus: Methylthioribose-1-phosphate isomerase (358 aa).

Residues 54 to 56, R96, and Q205 contribute to the substrate site; that span reads RGA. Catalysis depends on D246, which acts as the Proton donor. 256–257 serves as a coordination point for substrate; the sequence is NK.

Belongs to the eIF-2B alpha/beta/delta subunits family. MtnA subfamily.

It catalyses the reaction 5-(methylsulfanyl)-alpha-D-ribose 1-phosphate = 5-(methylsulfanyl)-D-ribulose 1-phosphate. It functions in the pathway amino-acid biosynthesis; L-methionine biosynthesis via salvage pathway; L-methionine from S-methyl-5-thio-alpha-D-ribose 1-phosphate: step 1/6. Catalyzes the interconversion of methylthioribose-1-phosphate (MTR-1-P) into methylthioribulose-1-phosphate (MTRu-1-P). The protein is Methylthioribose-1-phosphate isomerase of Azotobacter vinelandii (strain DJ / ATCC BAA-1303).